Reading from the N-terminus, the 132-residue chain is Fatty acid-binding protein, adipocyte (132 aa).

An N-acetylcysteine modification is found at C2. Residue S13 is modified to Phosphoserine. Y20 is subject to Phosphotyrosine; by Tyr-kinases. The short motif at 22-32 is the Nuclear localization signal element; it reads KEVGVGFATRK. 127-129 provides a ligand contact to a fatty acid; it reads RVY.

This sequence belongs to the calycin superfamily. Fatty-acid binding protein (FABP) family. As to quaternary structure, monomer. Homodimer. Interacts with PPARG.

It localises to the cytoplasm. It is found in the nucleus. In terms of biological role, lipid transport protein in adipocytes. Binds both long chain fatty acids and retinoic acid. Delivers long-chain fatty acids and retinoic acid to their cognate receptors in the nucleus. The chain is Fatty acid-binding protein, adipocyte (FABP4) from Cervus elaphus (Red deer).